The chain runs to 246 residues: Eukaryotic translation initiation factor 6 (246 aa).

2 positions are modified to phosphoserine; by CK1: S174 and S175.

The protein belongs to the eIF-6 family. Monomer. Associates with the 60S ribosomal subunit. In terms of processing, phosphorylation at Ser-174 and Ser-175 promotes nuclear export.

The protein localises to the cytoplasm. It is found in the nucleus. The protein resides in the nucleolus. Binds to the 60S ribosomal subunit and prevents its association with the 40S ribosomal subunit to form the 80S initiation complex in the cytoplasm. Is also involved in ribosome biogenesis. Associates with pre-60S subunits in the nucleus and is involved in its nuclear export. The protein is Eukaryotic translation initiation factor 6 (tif-6) of Neurospora crassa (strain ATCC 24698 / 74-OR23-1A / CBS 708.71 / DSM 1257 / FGSC 987).